The primary structure comprises 184 residues: Homeobox protein LOX10 (184 aa).

Disordered regions lie at residues Lys1–His29 and Tyr129–Gly184. Residues Arg76–Lys135 constitute a DNA-binding region (homeobox). Low complexity-rich tracts occupy residues Asn140–Thr161 and Ser174–Gly184.

This sequence belongs to the NK-2 homeobox family. As to expression, expressed in a segmental pattern in the endoderm and in the cephalic nervous system.

It is found in the nucleus. May play a role in patterning the gut. In Helobdella triserialis (Leech), this protein is Homeobox protein LOX10 (LOX10).